The sequence spans 884 residues: Valine--tRNA ligase (884 aa).

Positions 46-56 (PNVTGKLHLGH) match the 'HIGH' region motif. The 'KMSKS' region motif lies at 520–524 (KMSKS). ATP is bound at residue K523. The stretch at 809–844 (LADLLNVEEELARLEKELAKWQKELNMVGKKLSNER) forms a coiled coil.

Belongs to the class-I aminoacyl-tRNA synthetase family. ValS type 1 subfamily. Monomer.

The protein resides in the cytoplasm. The enzyme catalyses tRNA(Val) + L-valine + ATP = L-valyl-tRNA(Val) + AMP + diphosphate. In terms of biological role, catalyzes the attachment of valine to tRNA(Val). As ValRS can inadvertently accommodate and process structurally similar amino acids such as threonine, to avoid such errors, it has a 'posttransfer' editing activity that hydrolyzes mischarged Thr-tRNA(Val) in a tRNA-dependent manner. The polypeptide is Valine--tRNA ligase (Streptococcus agalactiae serotype Ia (strain ATCC 27591 / A909 / CDC SS700)).